We begin with the raw amino-acid sequence, 339 residues long: Small ribosomal subunit biogenesis GTPase RsgA (339 aa).

Residues 111 to 271 (MRGLLKPVAA…LIDSPGIREF (161 aa)) enclose the CP-type G domain. GTP contacts are provided by residues 159–162 (NKAD) and 213–221 (GQSGVGKSS). Zn(2+) is bound by residues cysteine 295, cysteine 300, histidine 302, and cysteine 308.

Belongs to the TRAFAC class YlqF/YawG GTPase family. RsgA subfamily. In terms of assembly, monomer. Associates with 30S ribosomal subunit, binds 16S rRNA. It depends on Zn(2+) as a cofactor.

It localises to the cytoplasm. One of several proteins that assist in the late maturation steps of the functional core of the 30S ribosomal subunit. Helps release RbfA from mature subunits. May play a role in the assembly of ribosomal proteins into the subunit. Circularly permuted GTPase that catalyzes slow GTP hydrolysis, GTPase activity is stimulated by the 30S ribosomal subunit. This is Small ribosomal subunit biogenesis GTPase RsgA from Pseudomonas aeruginosa (strain UCBPP-PA14).